The sequence spans 137 residues: 14 kDa proline-rich protein DC2.15 (137 aa).

A signal peptide spans 1 to 25; sequence MGSKNSASVALFFTLNILFFALVSS. Residues 30–53 form a disordered region; sequence PDPYKPKPKPTPKPTPTPYPSAGK. Pro residues predominate over residues 38–48; that stretch reads KPTPKPTPTPY. A helical membrane pass occupies residues 88–104; sequence LEGLVNLEAAVCLCTAI.

It is found in the membrane. May be connected with the initiation of embryogenesis or with the metabolic changes produced by the removal of auxins. This Daucus carota (Wild carrot) protein is 14 kDa proline-rich protein DC2.15.